Consider the following 377-residue polypeptide: Nitric oxide reductase FlRd-NAD(+) reductase (377 aa).

It belongs to the FAD-dependent oxidoreductase family. FAD serves as cofactor.

It localises to the cytoplasm. The catalysed reaction is 2 reduced [nitric oxide reductase rubredoxin domain] + NAD(+) + H(+) = 2 oxidized [nitric oxide reductase rubredoxin domain] + NADH. It participates in nitrogen metabolism; nitric oxide reduction. In terms of biological role, one of at least two accessory proteins for anaerobic nitric oxide (NO) reductase. Reduces the rubredoxin moiety of NO reductase. The chain is Nitric oxide reductase FlRd-NAD(+) reductase from Klebsiella pneumoniae subsp. pneumoniae (strain ATCC 700721 / MGH 78578).